Reading from the N-terminus, the 134-residue chain is MDSEYAALLERAYKLVAPKAQRRAEIPKIEVENMPRKTIIPNFGQIAKRLNRDVYFMAKFFQKELAVPGTLEGDVFTLHGEKSPKVVEAVYDRFIRYYVVCPVCNSIDTELRKEGRIFIMRCLACGASTPVRPL.

It belongs to the eIF-2-beta/eIF-5 family. As to quaternary structure, heterotrimer composed of an alpha, a beta and a gamma chain.

EIF-2 functions in the early steps of protein synthesis by forming a ternary complex with GTP and initiator tRNA. In Pyrobaculum aerophilum (strain ATCC 51768 / DSM 7523 / JCM 9630 / CIP 104966 / NBRC 100827 / IM2), this protein is Translation initiation factor 2 subunit beta.